The sequence spans 476 residues: Growth/differentiation factor 10 (476 aa).

The first 29 residues, 1 to 29, serve as a signal peptide directing secretion; sequence MAPGLARISLRSQLLPLVPLLLLLRGAGC. Residues 30–366 constitute a propeptide that is removed on maturation; it reads GHRVPSWSSL…EKTMQKARRR (337 aa). Asparagine 114, asparagine 152, and asparagine 277 each carry an N-linked (GlcNAc...) asparagine glycan. Disordered stretches follow at residues 268–305 and 330–358; these read GDFE…LDER and PRTG…FDEK. Cystine bridges form between cysteine 374/cysteine 441, cysteine 403/cysteine 473, and cysteine 407/cysteine 475. N-linked (GlcNAc...) asparagine glycosylation is present at asparagine 467.

The protein belongs to the TGF-beta family. In terms of assembly, homodimer or heterodimer. Can form a non-covalent complex of the mature region and the pro-region. As to expression, costa, costicartilage, femur, calvaria, trachea, aorta and brain. Predominantly in the cerebellum.

It is found in the secreted. Its function is as follows. Growth factor involved in osteogenesis and adipogenesis. Plays an inhibitory role in the process of osteoblast differentiation via SMAD2/3 pathway. Plays an inhibitory role in the process of adipogenesis. This chain is Growth/differentiation factor 10, found in Rattus norvegicus (Rat).